We begin with the raw amino-acid sequence, 434 residues long: BEN domain-containing protein 7 (434 aa).

Residues lysine 16, lysine 56, and lysine 85 each participate in a glycyl lysine isopeptide (Lys-Gly) (interchain with G-Cter in SUMO2) cross-link. Disordered stretches follow at residues 96–151 and 212–262; these read PQRS…SNGE and SRKR…ERTS. Residues 97-150 are compositionally biased toward polar residues; it reads QRSNSSTEASQGLHSNSRGAWNELPTQSGQFSGQSGPRSRTFQTQPHISASSNG. The segment covering 212-222 has biased composition (basic residues); the sequence is SRKRNKKKKVL. Residue lysine 244 forms a Glycyl lysine isopeptide (Lys-Gly) (interchain with G-Cter in SUMO2) linkage. The BEN domain occupies 289 to 399; sequence GFDVFMPKSQ…RRLKRGSAEV (111 aa). Threonine 326 bears the Phosphothreonine mark. Position 330 is a phosphoserine (serine 330). Positions 414–434 are disordered; sequence TGHTFVIKRETPEDPEPGSVA.

In Mus musculus (Mouse), this protein is BEN domain-containing protein 7 (Bend7).